The chain runs to 1368 residues: DNA-directed RNA polymerase subunit beta (1368 aa).

Belongs to the RNA polymerase beta chain family. The RNAP catalytic core consists of 2 alpha, 1 beta, 1 beta' and 1 omega subunit. When a sigma factor is associated with the core the holoenzyme is formed, which can initiate transcription.

It carries out the reaction RNA(n) + a ribonucleoside 5'-triphosphate = RNA(n+1) + diphosphate. DNA-dependent RNA polymerase catalyzes the transcription of DNA into RNA using the four ribonucleoside triphosphates as substrates. The sequence is that of DNA-directed RNA polymerase subunit beta from Cupriavidus metallidurans (strain ATCC 43123 / DSM 2839 / NBRC 102507 / CH34) (Ralstonia metallidurans).